Reading from the N-terminus, the 394-residue chain is MTNIIRQFLRQEAAGGLILIIAAAIALLMANSALQGVYQSFLDIPVSIKIASLDISKPLLLWINDGLMAVFFLMIGLEVKRELMEGSLAGRDKAVFPAIAALGGMLAPALIYLLFNGADEVTRQGWAIPAATDIAFALGVMALLGNRVPTGLKVFLLALAIIDDLGVIIIIALFYTQQVSLQSLGIAAAAIALLAYMNWRGVGKTSAYLLVGLVLWVCILKSGVHATLAGVIVGFMIPLHTQDQRSPSESLEHGLHPWVAYLILPLFAFANAGVSLQGVSLSGLTSLLPMGIATGLFIGKPLGIFTFSWLAVKLGIAKLPDAINFKQIFAVSVLCGIGFTMSIFIASLAFEGTDIALTTYSKLGILLGSTTAAVVGYSLLRLVLPARRKAVNVR.

11 helical membrane-spanning segments follow: residues 14 to 34 (AGGLILIIAAAIALLMANSAL), 59 to 79 (LLLWINDGLMAVFFLMIGLEV), 95 to 115 (VFPAIAALGGMLAPALIYLLF), 125 to 145 (GWAIPAATDIAFALGVMALLG), 154 to 174 (VFLLALAIIDDLGVIIIIALF), 179 to 199 (VSLQSLGIAAAAIALLAYMNW), 213 to 233 (LVLWVCILKSGVHATLAGVIV), 254 to 274 (GLHPWVAYLILPLFAFANAGV), 292 to 312 (IATGLFIGKPLGIFTFSWLAV), 328 to 348 (IFAVSVLCGIGFTMSIFIASL), and 363 to 383 (LGILLGSTTAAVVGYSLLRLV).

The protein belongs to the NhaA Na(+)/H(+) (TC 2.A.33) antiporter family.

It is found in the cell inner membrane. It carries out the reaction Na(+)(in) + 2 H(+)(out) = Na(+)(out) + 2 H(+)(in). In terms of biological role, na(+)/H(+) antiporter that extrudes sodium in exchange for external protons. The chain is Na(+)/H(+) antiporter NhaA from Yersinia pestis bv. Antiqua (strain Antiqua).